The following is a 701-amino-acid chain: Acetyl-coenzyme A synthetase, cytoplasmic (701 aa).

Over residues 1 to 26 (MGLPEERRKSGSGSRAREETGAEGRV) the composition is skewed to basic and acidic residues. A disordered region spans residues 1 to 37 (MGLPEERRKSGSGSRAREETGAEGRVRGWSPPPEVRR). An interaction with TFEB region spans residues 1–107 (MGLPEERRKS…GATTNICYNV (107 aa)). Serine 30 carries the post-translational modification Phosphoserine. 219–222 (RGEK) provides a ligand contact to CoA. Phosphoserine is present on residues serine 263, serine 265, and serine 267. Residue threonine 363 coordinates CoA. Residue lysine 418 is modified to N6-acetyllysine. Residues 439 to 441 (GEP), 463 to 468 (DTFWQT), aspartate 552, and arginine 567 each bind ATP. CoA-binding residues include serine 575 and arginine 636. The short motif at 656–668 (KTRSGKIMRRVLR) is the Nuclear localization signal element. Position 659 is a phosphoserine; by AMPK (serine 659). Lysine 661 is modified (N6-acetyllysine).

This sequence belongs to the ATP-dependent AMP-binding enzyme family. Monomer. Interacts with TFEB. AMPK-mediated phosphorylated form at Ser-659 interacts with KPNA1; this interaction results in nuclear translocation of ACSS2. Interacts with the 'Thr-172' phosphorylated form of PRKAA2. Interacts with CREBBP. In terms of processing, reversibly acetylated at Lys-661. The acetyl-CoA synthase activity is inhibited by acetylation and activated by deacetylation mediated by the deacetylases SIRT1 and SIRT3. In terms of tissue distribution, expressed in the hippocampus.

The protein localises to the cytoplasm. It is found in the cytosol. The protein resides in the nucleus. It catalyses the reaction acetate + ATP + CoA = acetyl-CoA + AMP + diphosphate. The enzyme catalyses propanoate + ATP + CoA = propanoyl-CoA + AMP + diphosphate. Inhibited by acetylation at Lys-661 and activated by deacetylation mediated by the deacetylases SIRT1 and SIRT3. Functionally, catalyzes the synthesis of acetyl-CoA from short-chain fatty acids. Acetate is the preferred substrate but can also utilize propionate with a much lower affinity. Nuclear ACSS2 promotes glucose deprivation-induced lysosomal biogenesis and autophagy, tumor cell survival and brain tumorigenesis. Glucose deprivation results in AMPK-mediated phosphorylation of ACSS2 leading to its translocation to the nucleus where it binds to TFEB and locally produces acetyl-CoA for histone acetylation in the promoter regions of TFEB target genes thereby activating their transcription. The regulation of genes associated with autophagy and lysosomal activity through ACSS2 is important for brain tumorigenesis and tumor survival. Acts as a chromatin-bound transcriptional coactivator that up-regulates histone acetylation and expression of neuronal genes. Can be recruited to the loci of memory-related neuronal genes to maintain a local acetyl-CoA pool, providing the substrate for histone acetylation and promoting the expression of specific genes, which is essential for maintaining long-term spatial memory. The protein is Acetyl-coenzyme A synthetase, cytoplasmic (Acss2) of Mus musculus (Mouse).